Here is a 236-residue protein sequence, read N- to C-terminus: 2,3,4,5-tetrahydropyridine-2,6-dicarboxylate N-acetyltransferase (236 aa).

Belongs to the transferase hexapeptide repeat family. DapH subfamily.

The enzyme catalyses (S)-2,3,4,5-tetrahydrodipicolinate + acetyl-CoA + H2O = L-2-acetamido-6-oxoheptanedioate + CoA. Its pathway is amino-acid biosynthesis; L-lysine biosynthesis via DAP pathway; LL-2,6-diaminopimelate from (S)-tetrahydrodipicolinate (acetylase route): step 1/3. In terms of biological role, catalyzes the transfer of an acetyl group from acetyl-CoA to tetrahydrodipicolinate. The sequence is that of 2,3,4,5-tetrahydropyridine-2,6-dicarboxylate N-acetyltransferase from Clostridium botulinum (strain Okra / Type B1).